The primary structure comprises 89 residues: Class I hydrophobin D (89 aa).

Residues 1-16 form the signal peptide; the sequence is MKFSLATIALAAAVVA. 4 cysteine pairs are disulfide-bonded: Cys28/Cys68, Cys39/Cys60, Cys40/Cys52, and Cys69/Cys85. N-linked (GlcNAc...) asparagine glycosylation is present at Asn36.

The protein belongs to the fungal hydrophobin family.

It localises to the secreted. It is found in the cell wall. The protein resides in the vacuole. Its subcellular location is the cytoplasmic vesicle. In terms of biological role, aerial growth, conidiation, and dispersal of filamentous fungi in the environment rely upon a capability of their secreting small amphipathic proteins called hydrophobins (HPBs) with low sequence identity. Class I can self-assemble into an outermost layer of rodlet bundles on aerial cell surfaces, conferring cellular hydrophobicity that supports fungal growth, development and dispersal; whereas Class II form highly ordered films at water-air interfaces through intermolecular interactions but contribute nothing to the rodlet structure. Hyd1D contributes to certain cell wall-related features, such as hydrophobicity but is not involved in cell wall-related events during fungal proliferation in host hemocoel. Does not contribute to conidial hydrophobicity. Involved in insect hemocoel colonization independent of cell hydrophobicity. The polypeptide is Class I hydrophobin D (Beauveria bassiana (strain ARSEF 2860) (White muscardine disease fungus)).